Reading from the N-terminus, the 402-residue chain is Selenoprotein P (402 aa).

The first 19 residues, Met1 to Thr19, serve as a signal peptide directing secretion. Position 59 (Sec59) is a non-standard amino acid, selenocysteine. N-linked (GlcNAc...) asparagine glycosylation is found at Asn83 and Asn174. The disordered stretch occupies residues Lys196–Leu291. Residues Arg203–His231 are compositionally biased toward basic residues. 13 repeat units span residues His204–His205, His206–Pro207, His208–Pro209, His210–Ser211, His212–Pro213, His214–Pro215, His216–Pro217, His218–Pro219, His220–Pro221, His222–Pro223, His224–Pro225, His226–Pro227, and His228–His229. Residues His204 to His229 form a 13 X 2 AA tandem repeats of H-[PHS] region. Residues Gln232 to Thr247 show a composition bias toward basic and acidic residues. The segment covering Leu259–Pro269 has biased composition (basic residues). Position 284 is a phosphoserine (Ser284). 11 non-standard amino acids (selenocysteine) are found at residues Sec297, Sec307, Sec338, Sec350, Sec363, Sec365, Sec372, Sec388, Sec390, Sec397, and Sec399. A disordered region spans residues Leu367–Asn402.

Belongs to the selenoprotein P family. Post-translationally, phosphorylation sites are present in the extracellular medium. Brain and kidney. Most prominently expressed in the cerebellar cortex, hippocampus and olfactory bulb.

It localises to the secreted. In terms of biological role, constitutes a major selenium pool in the brain and may play an important role in developing and/or modulating the morphology of neurons and/or glial cells. The protein is Selenoprotein P of Bos taurus (Bovine).